The following is a 374-amino-acid chain: Serpin B8 (374 aa).

Belongs to the serpin family. Ov-serpin subfamily.

The protein localises to the cytoplasm. Its function is as follows. Has an important role in epithelial desmosome-mediated cell-cell adhesion. The chain is Serpin B8 (SERPINB8) from Bos taurus (Bovine).